We begin with the raw amino-acid sequence, 97 residues long: Protein transport protein SFT1 (97 aa).

At 1–74 (MSNSRYSQTE…RLTRSLKAGN (74 aa)) the chain is on the cytoplasmic side. One can recognise a t-SNARE coiled-coil homology domain in the interval 7–69 (SQTESNNDRK…KNSSSRLTRS (63 aa)). The helical; Anchor for type IV membrane protein transmembrane segment at 75 to 94 (SIWRMVGLALLIFFILYTLF) threads the bilayer. At 95-97 (KLF) the chain is on the lumenal side.

Component of a SNARE complex consisting of SED5, GOS1, YKT6 and SFT1.

The protein localises to the golgi apparatus membrane. Functionally, vesicle SNARE required for retrograde transport within the Golgi complex. This chain is Protein transport protein SFT1 (SFT1), found in Saccharomyces cerevisiae (strain ATCC 204508 / S288c) (Baker's yeast).